A 537-amino-acid chain; its full sequence is Putative cysteine ligase BshC (537 aa).

A coiled-coil region spans residues 415–439; it reads EKASNNFINEVEEMKIQQQELYNNL.

Belongs to the BshC family.

In terms of biological role, involved in bacillithiol (BSH) biosynthesis. May catalyze the last step of the pathway, the addition of cysteine to glucosamine malate (GlcN-Mal) to generate BSH. This chain is Putative cysteine ligase BshC, found in Staphylococcus epidermidis (strain ATCC 12228 / FDA PCI 1200).